Consider the following 196-residue polypeptide: Nodulation protein A (196 aa).

The protein belongs to the NodA family.

The protein localises to the cytoplasm. N-acyltransferase required for nodulation. Acts in the production of a small, heat-stable compound (Nod) that stimulates mitosis in various plant protoplasts. The sequence is that of Nodulation protein A from Sinorhizobium terangae.